The primary structure comprises 197 residues: Protein Hikeshi (197 aa).

Positions 18–55 are required for F-X-F-G repeats-nucleoporins recognition and nuclear import; that stretch reads VAEDKFVFDLPDYENINHVVVFMLGTVPFPEGMGGSVY. A flexible linker region involved in nuclear import of HSP70 proteins region spans residues 124–134; that stretch reads QTPVGNAAVSS.

Belongs to the OPI10 family. In terms of assembly, forms an asymmetric homodimer; required for binding and nuclear import of HSP70 proteins. Interacts with ATP-bound HSP70 proteins. Interacts with NUP62 and NUP153 (via F-X-F-G repeats). Interacts with HSPA8.

The protein resides in the cytoplasm. It is found in the cytosol. The protein localises to the nucleus. Its function is as follows. Acts as a specific nuclear import carrier for HSP70 proteins following heat-shock stress: acts by mediating the nucleoporin-dependent translocation of ATP-bound HSP70 proteins into the nucleus. HSP70 proteins import is required to protect cells from heat shock damages. Does not translocate ADP-bound HSP70 proteins into the nucleus. The chain is Protein Hikeshi from Bos taurus (Bovine).